The following is a 718-amino-acid chain: Phenylalanine--tRNA ligase beta subunit (718 aa).

One can recognise a tRNA-binding domain in the interval 39-153 (LNEISGIKFG…IFDLESNPLK (115 aa)). In terms of domain architecture, B5 spans 386–460 (SKKTFLDLNY…RFYGLEKLKD (75 aa)). Residues Asp-438, Asp-444, and Asp-448 each coordinate Mg(2+).

Belongs to the phenylalanyl-tRNA synthetase beta subunit family. Type 1 subfamily. Tetramer of two alpha and two beta subunits. The cofactor is Mg(2+).

Its subcellular location is the cytoplasm. The catalysed reaction is tRNA(Phe) + L-phenylalanine + ATP = L-phenylalanyl-tRNA(Phe) + AMP + diphosphate + H(+). The protein is Phenylalanine--tRNA ligase beta subunit of Mesomycoplasma hyopneumoniae (strain 232) (Mycoplasma hyopneumoniae).